Consider the following 247-residue polypeptide: NAD-dependent protein deacetylase (247 aa).

Residues 1-247 (MDTRKNLKEL…LGGIVEELGY (247 aa)) enclose the Deacetylase sirtuin-type domain. Residues A23, T27, F34, R35, Q104, I106, D107, and H122 each coordinate NAD(+). Residue F34 coordinates nicotinamide. Residues I106 and D107 each contribute to the nicotinamide site. H122 functions as the Proton acceptor in the catalytic mechanism. Residues C130, C133, C152, and C155 each coordinate Zn(2+). NAD(+) is bound by residues T193, S194, N216, and I234.

The protein belongs to the sirtuin family. Class U subfamily. It depends on Zn(2+) as a cofactor.

The protein resides in the cytoplasm. It catalyses the reaction N(6)-acetyl-L-lysyl-[protein] + NAD(+) + H2O = 2''-O-acetyl-ADP-D-ribose + nicotinamide + L-lysyl-[protein]. NAD-dependent protein deacetylase which modulates the activities of several enzymes which are inactive in their acetylated form. The polypeptide is NAD-dependent protein deacetylase (Clostridium tetani (strain Massachusetts / E88)).